We begin with the raw amino-acid sequence, 550 residues long: MRVLSATLLAGAASAAAPPFQQVLGAHKEYAENVIQQGADAFKPLQHLQDQFKSLSGEARQLWEEVSNYFPESMESAPLLSLPKKHTRRPDSHWDYHVSGAEVQDIWVSGAEGTKEREVDGRLEAYNLRAKKVDPSALGIDPGVKQYSGYLDDDENDKHLFYWFFESRNDPKNDPVVLWLNGGPGCSSLTGLFMELGPSSIDSKIKPVYNDFSWNNNASVIFLDQPINVGYSYSGGSVSDTVAAGKDVYALLTLFFKQFPEYATQDFHIAGESYAGHYIPVMASEILSHKKRNINLKSVLIGNGLTDGLTQYGYYRPMACGEGGYPAVLDESTCQSMDNSLSRCQSMIQACYNSESPWVCVPASIYCNNAMLGPYQRTGQNVYDIRGKCEDESNLCYKGMGYVSEYLGQESVREAVGAEVDGYDSCNFDINRNFLFNGDWFKPYHRLVPGLLEQIPVLIYAGDADFICNWLGNKAWSEALEWPGQKEFASAELEDLKIVQNEHVGKKIGQIKSHGNFTFMRIYGGGHMVPMDQPESGLEFFNRWIGGEWF.

Residues 1 to 17 form the signal peptide; it reads MRVLSATLLAGAASAAA. The propeptide occupies 18 to 131; the sequence is PPFQQVLGAH…RLEAYNLRAK (114 aa). Disulfide bonds link cysteine 186/cysteine 426, cysteine 320/cysteine 334, cysteine 344/cysteine 367, cysteine 351/cysteine 360, and cysteine 389/cysteine 396. Asparagine 217 carries an N-linked (GlcNAc...) asparagine glycan. Serine 273 is an active-site residue. Aspartate 465 is a catalytic residue. An N-linked (GlcNAc...) asparagine glycan is attached at asparagine 516. The active site involves histidine 527.

The protein belongs to the peptidase S10 family.

It localises to the vacuole. It carries out the reaction Release of a C-terminal amino acid with broad specificity.. Its function is as follows. Vacuolar carboxypeptidase involved in degradation of small peptides. Digests preferentially peptides containing an aliphatic or hydrophobic residue in P1' position, as well as methionine, leucine or phenylalanine in P1 position of ester substrate. The chain is Carboxypeptidase Y homolog A (cpyA) from Penicillium rubens (strain ATCC 28089 / DSM 1075 / NRRL 1951 / Wisconsin 54-1255) (Penicillium chrysogenum).